A 794-amino-acid polypeptide reads, in one-letter code: Lon protease (794 aa).

Residues 13 to 204 (VPLYPLREII…KVYMHLTNEV (192 aa)) enclose the Lon N-terminal domain. 356 to 363 (GPPGVGKT) contributes to the ATP binding site. In terms of domain architecture, Lon proteolytic spans 592–773 (KDRVGVATGL…REVFVQALNP (182 aa)). Active-site residues include S679 and K722. Positions 774–788 (TSPAPTAATSARTPA) are enriched in low complexity. Residues 774 to 794 (TSPAPTAATSARTPAGAPPPQ) form a disordered region.

Belongs to the peptidase S16 family. Homohexamer. Organized in a ring with a central cavity.

It is found in the cytoplasm. The catalysed reaction is Hydrolysis of proteins in presence of ATP.. ATP-dependent serine protease that mediates the selective degradation of mutant and abnormal proteins as well as certain short-lived regulatory proteins. Required for cellular homeostasis and for survival from DNA damage and developmental changes induced by stress. Degrades polypeptides processively to yield small peptide fragments that are 5 to 10 amino acids long. Binds to DNA in a double-stranded, site-specific manner. The chain is Lon protease from Citrifermentans bemidjiense (strain ATCC BAA-1014 / DSM 16622 / JCM 12645 / Bem) (Geobacter bemidjiensis).